We begin with the raw amino-acid sequence, 228 residues long: Ran-binding protein 1 homolog a (228 aa).

A compositionally biased stretch (basic and acidic residues) spans Met1–Glu13. Disordered regions lie at residues Met1 to Pro30 and Ser159 to Thr228. Positions Glu14–Thr24 are enriched in acidic residues. One can recognise a RanBD1 domain in the interval Gln27 to Glu162. Residues Leu179–Thr228 show a composition bias toward basic and acidic residues.

In terms of assembly, interacts with the GTP-bound form of RAN1, RAN2 and RAN3. As to expression, ubiquitous. Preferentially expressed in root tips and gynoecium.

It is found in the nucleus. It localises to the nuclear pore complex. The protein is Ran-binding protein 1 homolog a (RANBP1A) of Arabidopsis thaliana (Mouse-ear cress).